A 982-amino-acid polypeptide reads, in one-letter code: Serine/threonine-protein kinase PknD (982 aa).

One can recognise a Protein kinase domain in the interval 51–342 (YQIIKSIGKG…ELIRDIENYL (292 aa)). ATP-binding positions include 57–65 (IGKGGMGEV) and Lys-80. The active-site Proton acceptor is the Asp-186.

It belongs to the protein kinase superfamily. Ser/Thr protein kinase family. Post-translationally, autophosphorylated on serine and threonine residues.

It carries out the reaction L-seryl-[protein] + ATP = O-phospho-L-seryl-[protein] + ADP + H(+). The enzyme catalyses L-threonyl-[protein] + ATP = O-phospho-L-threonyl-[protein] + ADP + H(+). In terms of biological role, together with the serine/threonine kinase Pkn1, may play a role in the specific interactions with host proteins during intracellular growth. This chain is Serine/threonine-protein kinase PknD, found in Protochlamydia amoebophila (strain UWE25).